A 148-amino-acid polypeptide reads, in one-letter code: UPF0208 membrane protein HD_1715 (148 aa).

2 consecutive transmembrane segments (helical) span residues 41 to 60 (AARF…YFFT) and 66 to 88 (ILAN…LYWL).

Belongs to the UPF0208 family.

The protein localises to the cell inner membrane. The chain is UPF0208 membrane protein HD_1715 from Haemophilus ducreyi (strain 35000HP / ATCC 700724).